Consider the following 1109-residue polypeptide: Protein translocase subunit SecA (1109 aa).

ATP contacts are provided by residues glutamine 175, 193-197 (GEGKT), and aspartate 695. The disordered stretch occupies residues 1038-1109 (VRQAAPEQRQ…KYKNCHGRNS (72 aa)). Composition is skewed to basic and acidic residues over residues 1045 to 1059 (QRQDMSKYREQKQDL) and 1071 to 1088 (DTREAVKREPIRAEKTVG). Zn(2+) is bound by residues cysteine 1093, cysteine 1095, cysteine 1104, and histidine 1105. Basic residues predominate over residues 1099–1109 (KKYKNCHGRNS).

The protein belongs to the SecA family. As to quaternary structure, monomer and homodimer. Part of the essential Sec protein translocation apparatus which comprises SecA, SecYEG and auxiliary proteins SecDF. Other proteins may also be involved. It depends on Zn(2+) as a cofactor.

The protein localises to the cell inner membrane. Its subcellular location is the cytoplasm. The enzyme catalyses ATP + H2O + cellular proteinSide 1 = ADP + phosphate + cellular proteinSide 2.. Its function is as follows. Part of the Sec protein translocase complex. Interacts with the SecYEG preprotein conducting channel. Has a central role in coupling the hydrolysis of ATP to the transfer of proteins into and across the cell membrane, serving as an ATP-driven molecular motor driving the stepwise translocation of polypeptide chains across the membrane. The sequence is that of Protein translocase subunit SecA from Bacteroides fragilis (strain ATCC 25285 / DSM 2151 / CCUG 4856 / JCM 11019 / LMG 10263 / NCTC 9343 / Onslow / VPI 2553 / EN-2).